The following is a 158-amino-acid chain: Cathelicidin-6 (158 aa).

The N-terminal stretch at Met-1 to Ala-29 is a signal peptide. The propeptide occupies Gln-30–Val-131. Cystine bridges form between Cys-86/Cys-97 and Cys-108/Cys-125.

It belongs to the cathelicidin family.

It is found in the secreted. Its function is as follows. Exerts a potent antimicrobial activity against Gram-negative and Gram-positive bacteria, including methicillin-resistant Staphylococcus aureus, and fungi. This Bos taurus (Bovine) protein is Cathelicidin-6 (CATHL6).